The sequence spans 781 residues: Cadherin-24 (781 aa).

The N-terminal stretch at 1 to 22 is a signal peptide; that stretch reads MWGLVRLLLAWLGGWGCMGRLA. The propeptide occupies 23–44; that stretch reads APVPAWAGSRGHSGPTLLRTRR. Topologically, residues 45–603 are extracellular; the sequence is SWVWNQFFVI…LSPTGLSTGA (559 aa). Cadherin domains follow at residues 46–150, 151–259, 260–374, 375–479, and 479–592; these read WVWN…PPVF, PLGP…PPKF, PQSL…PPAF, TQAT…APQL, and LAEP…WPEA. N-linked (GlcNAc...) asparagine glycosylation is found at asparagine 446, asparagine 510, and asparagine 525. A helical transmembrane segment spans residues 604-624; the sequence is LLAIVTCMGTLLALVVLFVAL. The Cytoplasmic portion of the chain corresponds to 625–781; it reads RRQKQEALMV…LYGAKEPPAP (157 aa). 2 disordered regions span residues 665-700 and 731-762; these read LQNPDGAAPPAAGPPVRRDVLPRTRAPRQPRPPGPA and EGRGSSCGSLSSLGSGSEAGGVPGPAEPLDDW. Positions 733–746 are enriched in low complexity; the sequence is RGSSCGSLSSLGSG.

As to quaternary structure, associates with alpha-, beta- and delta-catenins.

It localises to the cell membrane. Cadherins are calcium-dependent cell adhesion proteins. They preferentially interact with themselves in a homophilic manner in connecting cells; cadherins may thus contribute to the sorting of heterogeneous cell types. Cadherin-24 mediate strong cell-cell adhesion. The chain is Cadherin-24 (Cdh24) from Mus musculus (Mouse).